Reading from the N-terminus, the 316-residue chain is Initiation factor TFIIB homolog (316 aa).

The protein belongs to the asfivirus C315R family.

Putative initation factor. This is Initiation factor TFIIB homolog from Ornithodoros (relapsing fever ticks).